The following is a 228-amino-acid chain: Prophenin-2 (228 aa).

The N-terminal stretch at 1-29 (METQRASLCLGRWSLWLLLLALVVPSASA) is a signal peptide. Positions 30 to 146 (QALSYREAVL…FLRRPRLRRQ (117 aa)) are excised as a propeptide. Cystine bridges form between cysteine 85–cysteine 96 and cysteine 107–cysteine 124. Repeat copies occupy residues 148-157 (FPPPNVPGPR), 158-167 (FPPPNVPGPR), 168-177 (FPPPNFPGPR), 178-187 (FPPPNFPGPR), 188-197 (FPPPNFPGPP), 198-207 (FPPPIFPGPW), and 208-217 (FPPPPPFRPP). A 7 X 10 AA tandem repeats region spans residues 148–217 (FPPPNVPGPR…FPPPPPFRPP (70 aa)). Disordered stretches follow at residues 167 to 195 (RFPP…NFPG) and 207 to 228 (WFPP…PGRR). A Proline amide modification is found at proline 225. Residues 226–228 (GRR) constitute a propeptide, removed in mature form.

The protein belongs to the cathelicidin family.

The protein localises to the secreted. In terms of biological role, exerts antimicrobial activity. It is more effective against Gram-negative bacteria than Gram-positive bacteria. In Sus scrofa (Pig), this protein is Prophenin-2.